The sequence spans 285 residues: Chalcone synthase 6-4 (285 aa).

The active site involves Cys-60.

The protein belongs to the thiolase-like superfamily. Chalcone/stilbene synthases family.

The enzyme catalyses (E)-4-coumaroyl-CoA + 3 malonyl-CoA + 3 H(+) = 2',4,4',6'-tetrahydroxychalcone + 3 CO2 + 4 CoA. The protein operates within secondary metabolite biosynthesis; flavonoid biosynthesis. Its function is as follows. The primary product of this enzyme is 4,2',4',6'-tetrahydroxychalcone (also termed naringenin-chalcone or chalcone) which can under specific conditions spontaneously isomerize into naringenin. The sequence is that of Chalcone synthase 6-4 (CHS6-4) from Medicago sativa (Alfalfa).